The primary structure comprises 183 residues: Putative 3-methyladenine DNA glycosylase (183 aa).

This sequence belongs to the DNA glycosylase MPG family.

The chain is Putative 3-methyladenine DNA glycosylase from Rickettsia conorii (strain ATCC VR-613 / Malish 7).